A 229-amino-acid polypeptide reads, in one-letter code: Thylakoid lumenal 19 kDa protein, chloroplastic (229 aa).

The protein resides in the plastid. It is found in the chloroplast thylakoid lumen. In Arabidopsis thaliana (Mouse-ear cress), this protein is Thylakoid lumenal 19 kDa protein, chloroplastic.